Consider the following 105-residue polypeptide: Iron-sulfur cluster assembly protein CyaY (105 aa).

The protein belongs to the frataxin family.

Functionally, involved in iron-sulfur (Fe-S) cluster assembly. May act as a regulator of Fe-S biogenesis. This is Iron-sulfur cluster assembly protein CyaY from Photobacterium profundum (strain SS9).